The sequence spans 492 residues: Stage IV sporulation protein A (492 aa).

Positions glycine 24–serine 31 match the Walker A motif; involved in ATP-binding and hydrolysis motif. Glycine 24–serine 31 is a binding site for ATP.

In terms of assembly, polymerizes to self-assemble into static filaments. ATP hydrolysis is required by every subunit for incorporation into the growing polymer by inducing a conformational change that drives polymerization of a nucleotide-free filament. Polymerization requires a critical concentration of the protein and only occurs after it is localized to the surface of the developing spore. Interacts (via extreme C-terminus Gly-486) with SpoVM (via Ile-6). Interacts (via full-length) with SpoVID (via C-terminus 499-575 AA). Interacts with SafA. In terms of processing, seems to be cleaved by the YabG protease.

It is found in the cytoplasm. It carries out the reaction ATP + H2O = ADP + phosphate + H(+). In terms of biological role, ATPase. Has a role at an early stage in the morphogenesis of the spore coat outer layers. Its ATP hydrolysis is required for proper assembly of the spore coat. Forms a basement layer around the outside surface of the forespore and self-assembles irreversibly into higher order structures by binding and hydrolyzing ATP thus creating a durable and stable platform upon which thereafter morphogenesis of the coat can take place. Required for proper localization of spore coat protein CotE and sporulation-specific proteins including SpoVM. The protein is Stage IV sporulation protein A (spoIVA) of Bacillus subtilis (strain 168).